The sequence spans 553 residues: 4-coumarate--CoA ligase (553 aa).

ATP contacts are provided by S198, S199, G200, T201, T202, and K206. Positions 248 and 252 each coordinate (E)-4-coumaroyl-AMP. Residue K269 coordinates CoA. The interval 271–340 (EIVPFLELIQ…AKFPNAKLGQ (70 aa)) is SBD1. A318, Q340, G341, T345, and M353 together coordinate (E)-4-coumaroyl-AMP. Q340, G341, and T345 together coordinate ATP. The SBD2 stretch occupies residues 341–408 (GYGMTEAGPV…IRGDQIMKGY (68 aa)). Residues D429 and R444 each coordinate ATP. Positions 446 and 450 each coordinate (E)-4-coumaroyl-AMP. Residues K452 and G453 each coordinate CoA. K535 lines the ATP pocket.

The protein belongs to the ATP-dependent AMP-binding enzyme family. Mg(2+) serves as cofactor.

It carries out the reaction (E)-4-coumarate + ATP + CoA = (E)-4-coumaroyl-CoA + AMP + diphosphate. The catalysed reaction is (E)-4-coumarate + ATP + H(+) = (E)-4-coumaroyl-AMP + diphosphate. It catalyses the reaction (E)-4-coumaroyl-AMP + CoA = (E)-4-coumaroyl-CoA + AMP + H(+). The protein operates within phytoalexin biosynthesis; 3,4',5-trihydroxystilbene biosynthesis; 3,4',5-trihydroxystilbene from trans-4-coumarate: step 1/2. Carboxylate--CoA ligase that may use 4-coumarate as substrate. Follows a two-step reaction mechanism, wherein the carboxylate substrate first undergoes adenylation by ATP, followed by a thioesterification in the presence of CoA to yield the final CoA thioester. The chain is 4-coumarate--CoA ligase from Vanilla planifolia (Vanilla).